Consider the following 522-residue polypeptide: N-acetylgalactosamine-6-sulfatase (522 aa).

The N-terminal stretch at 1-26 is a signal peptide; sequence MAAVVAATRWWQLLLVLSAAGMGASG. The catalytic domain stretch occupies residues 27–379; that stretch reads APQPPNILLL…PTLLQGRLMD (353 aa). Ca(2+) contacts are provided by Asp39, Asp40, and Cys79. The active-site Nucleophile is Cys79. At Cys79 the chain carries 3-oxoalanine (Cys). Residue His142 is part of the active site. N-linked (GlcNAc...) asparagine glycosylation occurs at Asn204. Residues Asp288 and Asn289 each contribute to the Ca(2+) site. Cys308 and Cys419 are oxidised to a cystine. Asn423 carries N-linked (GlcNAc...) asparagine glycosylation. Cystine bridges form between Cys489–Cys518 and Cys501–Cys507.

It belongs to the sulfatase family. In terms of assembly, homodimer. It depends on Ca(2+) as a cofactor. In terms of processing, the conversion to 3-oxoalanine (also known as C-formylglycine, FGly), of a serine or cysteine residue in prokaryotes and of a cysteine residue in eukaryotes, is critical for catalytic activity.

The protein localises to the lysosome. The catalysed reaction is Hydrolysis of the 6-sulfate groups of the N-acetyl-D-galactosamine 6-sulfate units of chondroitin sulfate and of the D-galactose 6-sulfate units of keratan sulfate.. In Homo sapiens (Human), this protein is N-acetylgalactosamine-6-sulfatase (GALNS).